Here is a 148-residue protein sequence, read N- to C-terminus: MKKVTGQIKLQLPAGKANPAPPVGPALGQHGVNIMEFCKQFNAATQAQAKEALIIPVIITVYQDRSFTFVLKTPPAAILLKKAAGLHTEKKKGSGAHKPGKEKVGQVTRKQVEQIAKTKMQDMTAGTLEAAMRTVEGTALSMGIEIVG.

The disordered stretch occupies residues 89–108 (EKKKGSGAHKPGKEKVGQVT).

This sequence belongs to the universal ribosomal protein uL11 family. As to quaternary structure, part of the ribosomal stalk of the 50S ribosomal subunit. Interacts with L10 and the large rRNA to form the base of the stalk. L10 forms an elongated spine to which L12 dimers bind in a sequential fashion forming a multimeric L10(L12)X complex. In terms of processing, one or more lysine residues are methylated.

Its function is as follows. Forms part of the ribosomal stalk which helps the ribosome interact with GTP-bound translation factors. The chain is Large ribosomal subunit protein uL11 from Anaeromyxobacter dehalogenans (strain 2CP-1 / ATCC BAA-258).